Here is a 68-residue protein sequence, read N- to C-terminus: Sec-independent protein translocase protein TatA (68 aa).

A helical transmembrane segment spans residues 1 to 21; it reads MGSLSIWHWLIVLLIVVLVFG. The tract at residues 42–68 is disordered; it reads GMNEGAKDGQPPAKDAGRIIDGEADKK. Over residues 56–68 the composition is skewed to basic and acidic residues; sequence DAGRIIDGEADKK.

Belongs to the TatA/E family. In terms of assembly, the Tat system comprises two distinct complexes: a TatABC complex, containing multiple copies of TatA, TatB and TatC subunits, and a separate TatA complex, containing only TatA subunits. Substrates initially bind to the TatABC complex, which probably triggers association of the separate TatA complex to form the active translocon.

It localises to the cell inner membrane. Its function is as follows. Part of the twin-arginine translocation (Tat) system that transports large folded proteins containing a characteristic twin-arginine motif in their signal peptide across membranes. TatA could form the protein-conducting channel of the Tat system. In Chromobacterium violaceum (strain ATCC 12472 / DSM 30191 / JCM 1249 / CCUG 213 / NBRC 12614 / NCIMB 9131 / NCTC 9757 / MK), this protein is Sec-independent protein translocase protein TatA.